The sequence spans 114 residues: Aspartate 1-decarboxylase (114 aa).

The Schiff-base intermediate with substrate; via pyruvic acid role is filled by serine 25. Position 25 is a pyruvic acid (Ser) (serine 25). Position 57 (threonine 57) interacts with substrate. Tyrosine 58 serves as the catalytic Proton donor. Residue glycine 73 to alanine 75 coordinates substrate.

It belongs to the PanD family. In terms of assembly, heterooctamer of four alpha and four beta subunits. Pyruvate is required as a cofactor. Is synthesized initially as an inactive proenzyme, which is activated by self-cleavage at a specific serine bond to produce a beta-subunit with a hydroxyl group at its C-terminus and an alpha-subunit with a pyruvoyl group at its N-terminus.

The protein localises to the cytoplasm. It carries out the reaction L-aspartate + H(+) = beta-alanine + CO2. It participates in cofactor biosynthesis; (R)-pantothenate biosynthesis; beta-alanine from L-aspartate: step 1/1. Functionally, catalyzes the pyruvoyl-dependent decarboxylation of aspartate to produce beta-alanine. This Thermotoga sp. (strain RQ2) protein is Aspartate 1-decarboxylase.